We begin with the raw amino-acid sequence, 88 residues long: MRVHDQRLRFDVTPKPMGLNGSSLITARSVALLLFLSLLLLILPPFLPPLPPPPATLLLLPLLLMILLIFLAFSPSNEPSLAVEPLDP.

The segment at 25 to 76 is organ Size Related (OSR) domain; that stretch reads ITARSVALLLFLSLLLLILPPFLPPLPPPPATLLLLPLLLMILLIFLAFSPS. 2 helical membrane passes run 30 to 50 and 53 to 73; these read VALL…LPPL and PPAT…FLAF.

Belongs to the plant organ size related (OSR) protein family. As to expression, mostly expressed in flowers, and, to a lower extent, in leaves and cotyledons.

The protein localises to the membrane. It localises to the endoplasmic reticulum. The protein resides in the nucleus. It is found in the cytoplasm. Together with ARGOS and ARL, regulates organ growth and final organ size. Promotes both cell expansion and proliferation-dependent organ growth, in an ANT-dependent manner. The chain is Protein ORGAN SIZE RELATED 1 from Arabidopsis thaliana (Mouse-ear cress).